Reading from the N-terminus, the 563-residue chain is Anaerobic glycerol-3-phosphate dehydrogenase subunit A (563 aa).

20–48 (DVIIIGGGATGAGIARDCALRGIDCILLE) contributes to the FAD binding site.

Belongs to the FAD-dependent glycerol-3-phosphate dehydrogenase family. As to quaternary structure, composed of a catalytic GlpA/B dimer and of membrane bound GlpC. FAD serves as cofactor. FMN is required as a cofactor.

The protein resides in the cell inner membrane. The catalysed reaction is a quinone + sn-glycerol 3-phosphate = dihydroxyacetone phosphate + a quinol. It functions in the pathway polyol metabolism; glycerol degradation via glycerol kinase pathway; glycerone phosphate from sn-glycerol 3-phosphate (anaerobic route): step 1/1. The sequence is that of Anaerobic glycerol-3-phosphate dehydrogenase subunit A (glpA) from Haemophilus influenzae (strain ATCC 51907 / DSM 11121 / KW20 / Rd).